A 117-amino-acid chain; its full sequence is Large ribosomal subunit protein uL18 (117 aa).

Belongs to the universal ribosomal protein uL18 family. Part of the 50S ribosomal subunit; part of the 5S rRNA/L5/L18/L25 subcomplex. Contacts the 5S and 23S rRNAs.

This is one of the proteins that bind and probably mediate the attachment of the 5S RNA into the large ribosomal subunit, where it forms part of the central protuberance. This chain is Large ribosomal subunit protein uL18, found in Chromobacterium violaceum (strain ATCC 12472 / DSM 30191 / JCM 1249 / CCUG 213 / NBRC 12614 / NCIMB 9131 / NCTC 9757 / MK).